The sequence spans 411 residues: MDPNESHHHHQQQQLHHLHQQQQQQQQQQRLTSPYFHHQLQHHHHLPTTVATTASTGNAVPSSNNGLFPPQPQPQHQPNDGSSSLAVYPHSVPSSAVTAPMEPVKRKRGRPRKYVTPEQALAAKKLASSASSSSAKQRRELAAVTGGTVSTNSGSSKKSQLGSVGKTGQCFTPHIVNIAPGEDVVQKIMMFANQSKHELCVLSASGTISNASLRQPAPSGGNLPYEGQYEILSLSGSYIRTEQGGKSGGLSVSLSASDGQIIGGAIGSHLTAAGPVQVILGTFQLDRKKDAAGSGGKGDASNSGSRLTSPVSSGQLLGMGFPPGMESTGRNPMRGNDEQHDHHHHQAGLGGPHHFMMQAPQGIHMTHSRPSEWRGGGNSGHDGRGGGGYDLSGRIGHESSENGDYEQQIPD.

Disordered stretches follow at residues 1-32, 54-164, 289-348, and 366-411; these read MDPN…QRLT, ASTG…LGSV, KDAA…HQAG, and THSR…QIPD. Positions 7-19 are enriched in basic residues; the sequence is HHHHQQQQLHHLH. The span at 20–29 shows a compositional bias: low complexity; that stretch reads QQQQQQQQQQ. Residues 54–66 show a composition bias toward polar residues; it reads ASTGNAVPSSNNG. Positions 105-113 match the Bipartite nuclear localization signal motif; that stretch reads KRKRGRPRK. Positions 105 to 117 form a DNA-binding region, a.T hook; the sequence is KRKRGRPRKYVTP. Composition is skewed to low complexity over residues 120 to 135 and 144 to 159; these read ALAA…SSSA and VTGG…SKKS. The 141-residue stretch at 165-305 folds into the PPC domain; the sequence is GKTGQCFTPH…GKGDASNSGS (141 aa). Residues 306–315 are compositionally biased toward polar residues; that stretch reads RLTSPVSSGQ. A compositionally biased stretch (gly residues) spans 374–390; the sequence is RGGGNSGHDGRGGGGYD.

The protein localises to the nucleus. Its function is as follows. Transcription factor that specifically binds AT-rich DNA sequences related to the nuclear matrix attachment regions (MARs). The sequence is that of AT-hook motif nuclear-localized protein 14 from Arabidopsis thaliana (Mouse-ear cress).